A 491-amino-acid polypeptide reads, in one-letter code: UDP-N-acetylmuramate--L-alanine ligase (491 aa).

126–132 (GTHGKTT) serves as a coordination point for ATP.

The protein belongs to the MurCDEF family.

It localises to the cytoplasm. It catalyses the reaction UDP-N-acetyl-alpha-D-muramate + L-alanine + ATP = UDP-N-acetyl-alpha-D-muramoyl-L-alanine + ADP + phosphate + H(+). It participates in cell wall biogenesis; peptidoglycan biosynthesis. Functionally, cell wall formation. This Photorhabdus laumondii subsp. laumondii (strain DSM 15139 / CIP 105565 / TT01) (Photorhabdus luminescens subsp. laumondii) protein is UDP-N-acetylmuramate--L-alanine ligase.